A 96-amino-acid chain; its full sequence is Large ribosomal subunit protein uL23 (96 aa).

The protein belongs to the universal ribosomal protein uL23 family. In terms of assembly, part of the 50S ribosomal subunit. Contacts protein L29, and trigger factor when it is bound to the ribosome.

Its function is as follows. One of the early assembly proteins it binds 23S rRNA. One of the proteins that surrounds the polypeptide exit tunnel on the outside of the ribosome. Forms the main docking site for trigger factor binding to the ribosome. The chain is Large ribosomal subunit protein uL23 from Caldicellulosiruptor bescii (strain ATCC BAA-1888 / DSM 6725 / KCTC 15123 / Z-1320) (Anaerocellum thermophilum).